The following is a 435-amino-acid chain: Pregnancy-specific beta-1-glycoprotein 6 (435 aa).

Positions 1 to 34 are cleaved as a signal peptide; the sequence is MGPLSAPPCTQHITWKGLLLTASLLNFWNLPTTA. The Ig-like V-type domain maps to 35–143; it reads QVIIEAKPPK…TGYFTVTLYS (109 aa). Residues asparagine 61, asparagine 103, and asparagine 110 are each glycosylated (N-linked (GlcNAc...) asparagine). A Cell attachment site motif is present at residues 126-128; that stretch reads RGD. Ig-like C2-type domains follow at residues 148–233, 241–326, and 334–405; these read PSIS…VTLN, PYIT…VTLN, and PRIY…KEIS. 3 disulfide bridges follow: cysteine 168/cysteine 216, cysteine 261/cysteine 309, and cysteine 353/cysteine 393. N-linked (GlcNAc...) asparagine glycosylation is found at asparagine 198, asparagine 267, asparagine 302, and asparagine 386.

The protein belongs to the immunoglobulin superfamily. CEA family.

It localises to the secreted. This is Pregnancy-specific beta-1-glycoprotein 6 (PSG6) from Homo sapiens (Human).